Reading from the N-terminus, the 121-residue chain is Large ribosomal subunit protein uL18 (121 aa).

Belongs to the universal ribosomal protein uL18 family. Part of the 50S ribosomal subunit; part of the 5S rRNA/L5/L18/L25 subcomplex. Contacts the 5S and 23S rRNAs.

Its function is as follows. This is one of the proteins that bind and probably mediate the attachment of the 5S RNA into the large ribosomal subunit, where it forms part of the central protuberance. This Herpetosiphon aurantiacus (strain ATCC 23779 / DSM 785 / 114-95) protein is Large ribosomal subunit protein uL18.